The primary structure comprises 341 residues: tRNA N6-adenosine threonylcarbamoyltransferase (341 aa).

His-110 and His-114 together coordinate Fe cation. Residues 133-137 (LVSGG), Asp-166, Gly-179, and Asn-276 contribute to the substrate site. Asp-304 is a binding site for Fe cation.

It belongs to the KAE1 / TsaD family. The cofactor is Fe(2+).

The protein resides in the cytoplasm. The catalysed reaction is L-threonylcarbamoyladenylate + adenosine(37) in tRNA = N(6)-L-threonylcarbamoyladenosine(37) in tRNA + AMP + H(+). Its function is as follows. Required for the formation of a threonylcarbamoyl group on adenosine at position 37 (t(6)A37) in tRNAs that read codons beginning with adenine. Is involved in the transfer of the threonylcarbamoyl moiety of threonylcarbamoyl-AMP (TC-AMP) to the N6 group of A37, together with TsaE and TsaB. TsaD likely plays a direct catalytic role in this reaction. This chain is tRNA N6-adenosine threonylcarbamoyltransferase, found in Saccharophagus degradans (strain 2-40 / ATCC 43961 / DSM 17024).